We begin with the raw amino-acid sequence, 536 residues long: Arylsulfatase (536 aa).

Residues aspartate 13, aspartate 14, and cysteine 51 each coordinate Ca(2+). Catalysis depends on cysteine 51, which acts as the Nucleophile. A 3-oxoalanine (Cys) modification is found at cysteine 51. Residue histidine 115 is part of the active site. Aspartate 317 and asparagine 318 together coordinate Ca(2+).

The protein belongs to the sulfatase family. Monomer. The cofactor is Ca(2+). In terms of processing, the conversion to 3-oxoalanine (also known as C-formylglycine, FGly), of a serine or cysteine residue in prokaryotes and of a cysteine residue in eukaryotes, is critical for catalytic activity.

Its subcellular location is the cytoplasm. The catalysed reaction is an aryl sulfate + H2O = a phenol + sulfate + H(+). Functionally, hydrolyzes the bond between sulfate and the aromatic ring in a compound such as 4-nitrocatechol sulfate. This chain is Arylsulfatase (atsA), found in Pseudomonas aeruginosa (strain ATCC 15692 / DSM 22644 / CIP 104116 / JCM 14847 / LMG 12228 / 1C / PRS 101 / PAO1).